A 155-amino-acid chain; its full sequence is Microsomal glutathione S-transferase 1 (155 aa).

Over 3-9 the chain is Lumenal; that stretch reads NLSQLME. A helical membrane pass occupies residues 10–33; that stretch reads NEVFMAFASYTTIVLSKMNFMSTA. Residues 34 to 62 lie on the Cytoplasmic side of the membrane; that stretch reads TAFYRLTKKVFANPEDCAGFGKGENAKKY. R38 lines the glutathione pocket. Residues K42, K55, and K60 each carry the N6-acetyllysine modification. A helical membrane pass occupies residues 63–96; it reads LRTDDRVERVRRAHLNDLENIVPFLGIGLLYSLS. Glutathione is bound by residues R73, R74, H76, and E81. The Lumenal portion of the chain corresponds to 97–99; sequence GPD. A helical membrane pass occupies residues 100-123; sequence LSTAILHFRLFVRARIYHTIAYLT. A glutathione-binding site is contributed by Y121. At 124–128 the chain is on the cytoplasmic side; it reads PLPQP. A helical transmembrane segment spans residues 129–148; that stretch reads NRALAFFIGYGVTLSMAYRL. The Lumenal segment spans residues 149-155; it reads LKSKLYL.

The protein belongs to the MAPEG family. As to quaternary structure, homotrimer; The trimer binds only one molecule of glutathione.

The protein localises to the endoplasmic reticulum membrane. It localises to the mitochondrion outer membrane. It carries out the reaction RX + glutathione = an S-substituted glutathione + a halide anion + H(+). Functionally, conjugation of reduced glutathione to a wide number of exogenous and endogenous hydrophobic electrophiles. This chain is Microsomal glutathione S-transferase 1 (MGST1), found in Bos taurus (Bovine).